The chain runs to 840 residues: Sorting nexin-25 (840 aa).

The PXA domain occupies 1–164 (MDRVLRDVFD…MLLRQLEYRE (164 aa)). Residues 287-401 (QFEDIMTNPF…LVSDLYEKLM (115 aa)) enclose the RGS domain. A disordered region spans residues 404-437 (EEEEEPDAQLASEKDELGSGGEAGEEAVEGTSGV). A coiled-coil region spans residues 446 to 494 (IKLRELNEKLEYKRQALSSIQNAPKPDKKIISKLKDEILLIEKECTALQ). Residues 508–628 (GLWRASITSA…AFLSPSPDYL (121 aa)) form the PX domain. At Ser-665 the chain carries Phosphoserine.

It belongs to the sorting nexin family.

It is found in the endosome membrane. Functionally, may be involved in several stages of intracellular trafficking. The protein is Sorting nexin-25 (Snx25) of Mus musculus (Mouse).